We begin with the raw amino-acid sequence, 433 residues long: Transcobalamin-1 (433 aa).

The N-terminal stretch at 1-23 (MRQSHQLPLVGLLLFSFIPSQLC) is a signal peptide. Residues 24–310 (EICEVSEENY…DINKDSSCVS (287 aa)) are globular N-terminal alpha domain. 3 disulfide bridges follow: Cys-26/Cys-265, Cys-105/Cys-308, and Cys-155/Cys-197. 142-146 (TNYYQ) contributes to the cyanocob(III)alamin binding site. Residue Asn-160 is glycosylated (N-linked (GlcNAc...) asparagine). Asp-186 is a cyanocob(III)alamin binding site. N-linked (GlcNAc...) asparagine glycosylation is present at Asn-216. Asn-240 and Gln-289 together coordinate cyanocob(III)alamin. The tract at residues 311 to 332 (ASGNFNISADEPITVTPPDSQS) is flexible linker. N-linked (GlcNAc...) asparagine glycans are attached at residues Asn-316, Asn-337, Asn-343, Asn-349, Asn-354, and Asn-369. The segment at 333–433 (YISVNYSVRI…ENLEVRWSKY (101 aa)) is globular C-terminal beta domain. Position 385-386 (385-386 (YI)) interacts with cyanocob(III)alamin. The cysteines at positions 388 and 393 are disulfide-linked. Residues 402–404 (WEL), Leu-411, and Tyr-433 each bind cyanocob(III)alamin.

Belongs to the eukaryotic cobalamin transport proteins family. Contains about 30% carbohydrates. As to expression, produced by the salivary glands of the oral cavity, in response to ingestion of food. Major constituent of secondary granules in neutrophils.

It is found in the secreted. In terms of biological role, binds vitamin B12 with femtomolar affinity and protects it from the acidic environment of the stomach. In Homo sapiens (Human), this protein is Transcobalamin-1 (TCN1).